The chain runs to 132 residues: Small ribosomal subunit protein uS8 (132 aa).

The protein belongs to the universal ribosomal protein uS8 family. In terms of assembly, part of the 30S ribosomal subunit. Contacts proteins S5 and S12.

In terms of biological role, one of the primary rRNA binding proteins, it binds directly to 16S rRNA central domain where it helps coordinate assembly of the platform of the 30S subunit. The chain is Small ribosomal subunit protein uS8 from Latilactobacillus sakei subsp. sakei (strain 23K) (Lactobacillus sakei subsp. sakei).